Here is a 342-residue protein sequence, read N- to C-terminus: Ribosomal RNA small subunit methyltransferase C (342 aa).

This sequence belongs to the methyltransferase superfamily. RsmC family. As to quaternary structure, monomer.

The protein resides in the cytoplasm. The catalysed reaction is guanosine(1207) in 16S rRNA + S-adenosyl-L-methionine = N(2)-methylguanosine(1207) in 16S rRNA + S-adenosyl-L-homocysteine + H(+). Functionally, specifically methylates the guanine in position 1207 of 16S rRNA in the 30S particle. In Klebsiella pneumoniae subsp. pneumoniae (strain ATCC 700721 / MGH 78578), this protein is Ribosomal RNA small subunit methyltransferase C.